The following is a 54-amino-acid chain: Small ribosomal subunit protein uS14 (54 aa).

The Zn(2+) site is built by C19, C22, C37, and C40.

The protein belongs to the universal ribosomal protein uS14 family. Zinc-binding uS14 subfamily. As to quaternary structure, part of the 30S ribosomal subunit. Zn(2+) serves as cofactor.

Its function is as follows. Binds 16S rRNA, required for the assembly of 30S particles. This Saccharolobus solfataricus (strain ATCC 35092 / DSM 1617 / JCM 11322 / P2) (Sulfolobus solfataricus) protein is Small ribosomal subunit protein uS14.